The sequence spans 263 residues: uncharacterized protein (263 aa).

This is an uncharacterized protein from Mycobacterium tuberculosis (strain CDC 1551 / Oshkosh).